The following is a 122-amino-acid chain: uncharacterized protein (122 aa).

Position 55 is a phosphothreonine (Thr55). Ser72, Ser86, Ser96, Ser112, and Ser118 each carry phosphoserine.

It is found in the cytoplasm. This is an uncharacterized protein from Homo sapiens (Human).